A 476-amino-acid polypeptide reads, in one-letter code: Protein transport protein Sec61 subunit alpha isoform 2 (476 aa).

Residues 1 to 33 (MGIKFLEVIKPFCAVLPEIQKPERKIQFREKVL) lie on the Cytoplasmic side of the membrane. A helical membrane pass occupies residues 34 to 53 (WTAITLFIFLVCCQIPLFGI). At 54–76 (MSSDSADPFYWMRVILASNRGTL) the chain is on the lumenal side. A helical membrane pass occupies residues 77–96 (MELGISPIVTSGLIMQLLAG). The Cytoplasmic segment spans residues 97–117 (AKIIEVGDTPKDRALFNGAQK). The helical transmembrane segment at 118-138 (LFGMIITIGQAIVYVMTGMYG) threads the bilayer. Topologically, residues 139–144 (DPAEMG) are lumenal. Residues 145-165 (AGICLLIIIQLFVAGLIVLLL) form a helical membrane-spanning segment. Residues 166-172 (DELLQKG) are Cytoplasmic-facing. The chain crosses the membrane as a helical span at residues 173–193 (YGLGSGISLFIATNICETIVW). Residues 194-240 (KAFSPTTINTGRGTEFEGAVIALFHLLATRTDKVRALREAFYRQNLP) are Lumenal-facing. A helical transmembrane segment spans residues 241-261 (NLMNLIATVFVFAVVIYFQGF). The Cytoplasmic portion of the chain corresponds to 262 to 288 (RVDLPIKSARYRGQYSSYPIKLFYTSN). The chain crosses the membrane as a helical span at residues 289 to 309 (IPIILQSALVSNLYVISQMLS). Residues 310–354 (VRFSGNFLVNLLGQWADVSGGGPARSYPVGGLCYYLSPPESMGAI) are Lumenal-facing. Residues 355–375 (FEDPVHVVVYIIFMLGSCAFF) traverse the membrane as a helical segment. The Cytoplasmic segment spans residues 376–420 (SKTWIEVSGSSAKDVAKQLKEQQMVMRGHRDTSMVHELNRYIPTA). Residues 421–441 (AAFGGLCIGALSVLADFLGAI) traverse the membrane as a helical segment. The Lumenal segment spans residues 442–445 (GSGT). The helical transmembrane segment at 446–462 (GILLAVTIIYQYFEIFV) threads the bilayer. The Cytoplasmic segment spans residues 463–476 (KEQAEVGGMGALFF).

It belongs to the SecY/SEC61-alpha family. As to quaternary structure, the SEC61 channel-forming translocon complex consists of channel-forming core components SEC61A1, SEC61B and SEC61G and different auxiliary components such as SEC62 and SEC63.

The protein resides in the endoplasmic reticulum membrane. Functionally, component of SEC61 channel-forming translocon complex that mediates transport of signal peptide-containing precursor polypeptides across the endoplasmic reticulum (ER). Forms a ribosome receptor and a gated pore in the ER membrane, both functions required for cotranslational translocation of nascent polypeptides. The polypeptide is Protein transport protein Sec61 subunit alpha isoform 2 (SEC61A2) (Homo sapiens (Human)).